The chain runs to 597 residues: MDRFRPLAVLIAAALTLSGTTALSSAARAADADLARNGGFEAGLDGWTCTAGTTVNSPVRSGSSALKATPAGSDNARCAQTVTVQPNSQYTLSGHVQGSYVYLGASGTGTTDVSTWTQSAPDWRQLTTTFRTGPSTTRVTLYTHGWYGTGAYHADDISLVGPGGGTEQPPAPPTGLRTGSVTATSVALSWSPVTGATGYAVYRDGVKVATASGTSATVTGLTPDTAYAFQVAAVNGAGESAKSATVTATTAPGTGGGSADLPPHALVGYLHASFANGSGYTRLADVPDSWDVIDLAFGEPTSVTSGDIRFDRCPATECPNVESDAEFKAAIKAKQAAGKKVLISIGGQNGQVQLTTTAARDTFVSSVSKIIDEYGLDGLDIDFEGHSLSLNADDTDFKNPKTPVIVNLIQALKTLKAKYGDDFVLTMAPETFFVQLGYQYYGTGKWGGQDPRAGAYLPVIHALRDDLTLLHVQDYNSGPIMGLDNQYHSMGGADFHIAMTDMLLTGFPVAGDAANVFPPLRADQVAIGMPATTNAGNGHVAPAEAVKTLDCLTRKTNCGSYATHGTWPALRALMTWSINWDRFGGWEFQRTFDGYFG.

Positions 1–29 form a signal peptide, or 32; it reads MDRFRPLAVLIAAALTLSGTTALSSAARA. The Fibronectin type-III domain occupies 172-253; sequence PPTGLRTGSV…ATVTATTAPG (82 aa). One can recognise a GH18 domain in the interval 264–597; it reads HALVGYLHAS…FQRTFDGYFG (334 aa). The active-site Proton donor is Glu384.

This sequence belongs to the glycosyl hydrolase 18 family. Chitinase class II subfamily. In terms of processing, the N-terminus is blocked.

The enzyme catalyses Random endo-hydrolysis of N-acetyl-beta-D-glucosaminide (1-&gt;4)-beta-linkages in chitin and chitodextrins.. Its activity is regulated as follows. Inhibited by the pseudosugar allosamidin A. Its function is as follows. Exochitinase that generates exclusively chitobiose from chitotetraose, chitohexaose, and colloidal high-molecular mass chitin. In Streptomyces olivaceoviridis (Streptomyces corchorusii), this protein is Exochitinase 1 (chi01).